The chain runs to 173 residues: Cytidylate kinase (173 aa).

7–15 (GLAGTGTST) lines the ATP pocket.

This sequence belongs to the cytidylate kinase family. Type 2 subfamily.

It is found in the cytoplasm. It carries out the reaction CMP + ATP = CDP + ADP. The enzyme catalyses dCMP + ATP = dCDP + ADP. This is Cytidylate kinase from Methanosphaera stadtmanae (strain ATCC 43021 / DSM 3091 / JCM 11832 / MCB-3).